An 82-amino-acid chain; its full sequence is Toxin NaTx-13 (82 aa).

The region spanning 6–70 (PGGYPVNQFK…KNSIEVFSCG (65 aa)) is the LCN-type CS-alpha/beta domain. 4 disulfides stabilise this stretch: Cys16-Cys69, Cys20-Cys44, Cys30-Cys49, and Cys34-Cys51.

Belongs to the long (4 C-C) scorpion toxin superfamily. Sodium channel inhibitor family. Expressed by the venom gland.

It is found in the secreted. Probable sodium channel inhibitor. The sequence is that of Toxin NaTx-13 from Centruroides sculpturatus (Arizona bark scorpion).